Here is a 563-residue protein sequence, read N- to C-terminus: Arginine--tRNA ligase (563 aa).

A 'HIGH' region motif is present at residues Pro-108–His-118.

It belongs to the class-I aminoacyl-tRNA synthetase family. Monomer.

Its subcellular location is the cytoplasm. The enzyme catalyses tRNA(Arg) + L-arginine + ATP = L-arginyl-tRNA(Arg) + AMP + diphosphate. This Pasteurella multocida (strain Pm70) protein is Arginine--tRNA ligase (argS).